The following is a 785-amino-acid chain: MLPAAPGKGLGSPDPAPCGPAPPGNTKDIIMIYEEDAEEWALYLTEVFLHVVKREAILLYRLENFSFRHLELLNLTSYKCKLLILSNSLLRDLTPKKCQFLEKILHSPKSVVTLLCGVKSSDQLYELLNISQSRWEISTEQEPEDYISVIQSIIFKDSEDYFEVNIPTDLRAKHSGEISERKEIEELSEASRNTIPLAVVLPTEIPCENPGEIFIILRDEVIGDTVEVEFTSSNKRIRTRPALWNKKVWCMKALEFPAGSVHVNVYCDGIVKATTKIKYYPTAKAKECLFRMADSGESLCQNSIEELDGVLTSIFKHEIPYYEFQSLQTEICSQNKYTHFKELPTLLHCAAKFGLKNLAIHLLQCSGATWASKMKNMEGSDPAHIAERHGHKELKKIFEDFSIQEIDINNEQENDYEEDIASFSTYIPSTQNPAFHHESRKTYGQSADGAEANEMEGEGKQNGSGMETKHSPLEVGSESSEDQYDDLYVFIPGADPENNSQEPLMSSRPPLPPPRPVANAFQLERPHFTLPGTMVEGQMERSQNWGHPGVRQETGDEPKGEKEKKEEEKEQEEEEDPYTFAEIDDSEYDMILANLSIKKKTGSRSFIINRPPAPTPRPTSIPPKEETTPYIAQVFQQKTARRQSDDDKFCGLPKKQDRARIESPAFSTLRGCLTDGQEELILLQEKVKNGKMSMDEALEKFKHWQMGKSGLEMIQQEKLRQLRDCIIGKRPEEENVYNKLTIVHHPGGKETAHNENKFYNVHFSNKLPARPQVEKEFGFCCKKDH.

An interaction with ITPR2 region spans residues 1-154 (MLPAAPGKGL…DYISVIQSII (154 aa)). One can recognise a TIR domain in the interval 25–153 (NTKDIIMIYE…EDYISVIQSI (129 aa)). One can recognise a DBB domain in the interval 200 to 327 (VLPTEIPCEN…EIPYYEFQSL (128 aa)). ANK repeat units follow at residues 342–371 (ELPT…ATWA) and 378–408 (EGSD…EIDI). Disordered regions lie at residues 433–480 (PAFH…SESS), 493–514 (GADP…LPPP), 538–578 (QMER…EDPY), and 606–625 (FIIN…PPKE). Basic and acidic residues predominate over residues 553–568 (ETGDEPKGEKEKKEEE). The segment covering 569 to 578 (KEQEEEEDPY) has biased composition (acidic residues). A compositionally biased stretch (pro residues) spans 611 to 621 (PPAPTPRPTSI).

In terms of assembly, interacts with LYN, ITPR1 and ITPR2. Post-translationally, phosphorylated on tyrosines upon BCR activation. As to expression, expressed in B-cell but not T-cell or myeloid cell lines. Highest expression in CD19(+) B-cells, with very low expression in other cell populations.

Involved in B-cell receptor (BCR)-induced Ca(2+) mobilization from intracellular stores. Promotes Lyn-mediated phosphorylation of IP3 receptors 1 and 2. This Homo sapiens (Human) protein is B-cell scaffold protein with ankyrin repeats (BANK1).